Consider the following 131-residue polypeptide: Insulin-like 3 (131 aa).

Residues 1–20 form the signal peptide; that stretch reads MDPRLPAWALVLLGPALVFA. Intrachain disulfides connect cysteine 34–cysteine 116, cysteine 46–cysteine 129, and cysteine 115–cysteine 120. Residues 58–104 constitute a propeptide, c peptide like; the sequence is PATGGDRELLQWLERRHLLHGLVADSNLTLGPGLQPLPQTSHHHRHH.

This sequence belongs to the insulin family. Heterodimer of a B chain and an A chain linked by two disulfide bonds. Expressed in prenatal and postnatal Leydig cells. Found as well in the corpus luteum, trophoblast, fetal membranes and breast.

Its subcellular location is the secreted. Its function is as follows. Seems to play a role in testicular function. May be a trophic hormone with a role in testicular descent in fetal life. Is a ligand for LGR8 receptor. This is Insulin-like 3 (INSL3) from Homo sapiens (Human).